A 2108-amino-acid chain; its full sequence is MLSATYRDLNTASNLETSKEKQAAQIVIAQISLLFTTLNNDNFESVEREIRHILDRSSVDIYIKVWERLLTLSSRDILQAGKFLLQENLLHRLLLEFAKDLPKKSTDLIELLKERTFNNQEFQKQTGITLSLFIDLFDKSANKDIIESLDRSSQINDFKTIKMNHTNYLRNFFLQTTPETLESNLRDLLHSLEGESLNDLLALLLSEILSPGSQNLQNDPTRSWLTPPMVLDATNRGNVIARSISSLQANQINWNRVFNLMSTKYFLSAPLMPTTASLSCLFAALHDGPVIDEFFSCDWKVIFKLDLAIQLHKWSVQNGCFDLLNAEGTRKVSETIPNTKQSLLYLLSIASLNLELFLQREELSDGPMLAYFQECFFEDFNYAPEYLILALVKEMKRFVLLIENRTVIDEILITLLIQVHNKSPSSFKDVISTITDDSKIVDAAKIIINSDDAPIANFLKSLLDTGRLDTVINKLPFNEAFKILPCARQIGWEGFDTFLKTKVSPSNVDVVLESLEVQTKMTDTNTPFRSLKTFDLFAFHSLIEVLNKCPLDVLQLQRFESLEFSLLIAFPRLINFGFGHDEAILANGDIAGINNDIEKEMQNYLQKMYSGELAIKDVIELLRRLRDSDLPRDQEVFTCITHAVIAESTFFQDYPLDALATTSVLFGSMILFQLLRGFVLDVAFRIIMRFAKEPPESKMFKFAVQAIYAFRIRLAEYPQYCKDLLRDVPALKSQAQVYQSIVEAATLANAPKERSRPVQEMIPLKFFAVDEVSCQINQEGAPKDVVEKVLFVLNNVTLANLNNKVDELKKSLTPNYFSWFSTYLVTQRAKTEPNYHDLYSKVIVAMGSGLLHQFMVNVTLRQLFVLLSTKDEQAIDKKHLKNLASWLGCITLALNKPIKHKNIAFREMLIEAYKENRLEIVVPFVTKILQRASESKIFKPPNPWTVGILKLLIELNEKANWKLSLTFEVEVLLKSFNLTTKSLKPSNFINTPEVIETLSGALGSITLEQQQTEQQRQIILMQQHQQQMLIYQQRQQQQQQRQQQQQHHISANTIADQQAAFGGEGSISHDNPFNNLLGSTIFVTHPDLKRVFQMALAKSVREILLEVVEKSSGIAVVTTTKIILKDFATEVDESKLKTAAIIMVRHLAQSLARATSIEPLKEGIRSTMQSLAPNLMSLSSSPAEELDTAINENIGIALVLIEKASMDKSTQDLADQLMQAIAIRRYHKERRADQPFITQNTNPYSLSLPEPLGLKNTGVTPQQFRVYEEFGKNIPNLDVIPFAGLPAHAPPMTQNVGLTQPQQQQAQMPTQILTSEQIRAQQQQQQLQKSRLNQPSQSAQPPGVNVPNPQGGIAAVQSDLEQNQRVLVHLMDILVSQIKENATKNNLAELGDQNQIKTIIFQILTFIAKSAQKDQLALKVSQAVVNSLFATSESPLCREVLSLLLEKLCSLSLVARKDVVWWLVYALDSRKFNVPVIRSLLEVNLIDATELDNVLVTAMKNKMENSTEFAMKLIQNTVLSDDPILMRMDFIKTLEHLASSEDENVKKFIKEFEDTKIMPVRKGTKTTRTEKLYLVFTEWVKLLQRVENNDVITTVFIKQLVEKGVISDTDNLLTFVKSSLELSVSSFKESDPTDEVFIAIDALGSLIIKLLILQGFKDDTRRDYINAIFSVIVLVFAKDHSQEGTTFNERPYFRLFSNILYEWATIRTHNFVRISDSSTRQELIEFDSVFYNTFSGYLHALQPFAFPGFSFAWVTLLSHRMLLPIMLRLPNKIGWEKLMLLIIDLFKFLDQYTSKHAVSDAVSVVYKGTLRVILGISNDMPSFLIENHYELMNNLPPTYFQLKNVILSAIPKNMTVPNPYDVDLNMEDIPACKELPEVFFDPVIDLHSLKKPVDNYLRIPSNSLLRTILSAIYKDTYDIKKGVGYDFLSVDSKLIRAIVLHVGIEAGIEYKRTSSNAVFNTKSSYYTLLFNLIQNGSIEMKYQIILSIVEQLRYPNIHTYWFSFVLMNMFKSDEWNDQKLEVQEIILRNFLKRIIVNKPHTWGVSVFFTQLINNNDINLLDLPFVQSVPEIKLILQQLVKYSKKYTTSEQDDQSATINRRQTPLQSNA.

2 coiled-coil regions span residues 795–813 (NVTLANLNNKVDELKKSLT) and 1021–1046 (MQQHQQQMLIYQQRQQQQQQRQQQQQ). Residues 1323–1352 (QQQQLQKSRLNQPSQSAQPPGVNVPNPQGG) are disordered. Residues 1329–1339 (KSRLNQPSQSA) show a composition bias toward polar residues. The span at 1340–1352 (QPPGVNVPNPQGG) shows a compositional bias: low complexity. At threonine 2102 the chain carries Phosphothreonine.

It belongs to the CNOT1 family. Forms a NOT protein complex that comprises NOT1, NOT2, NOT3, NOT4 and NOT5. Subunit of the 1.0 MDa CCR4-NOT core complex that contains CCR4, CAF1, NOT1, NOT2, NOT3, NOT4, NOT5, CAF40 and CAF130. In the complex interacts with CCR4, POP2, NOT2, NOT4 and NOT5. The core complex probably is part of a less characterized 1.9 MDa CCR4-NOT complex.

It localises to the cytoplasm. Its subcellular location is the nucleus. Acts as a component of the CCR4-NOT core complex, which in the nucleus seems to be a general transcription factor, and in the cytoplasm the major mRNA deadenylase involved in mRNA turnover. The NOT protein subcomplex negatively regulates the basal and activated transcription of many genes. Preferentially affects TC-type TATA element-dependent transcription. Could directly or indirectly inhibit component(s) of the general transcription machinery. The polypeptide is General negative regulator of transcription subunit 1 (CDC39) (Saccharomyces cerevisiae (strain ATCC 204508 / S288c) (Baker's yeast)).